The sequence spans 540 residues: L-aspartate oxidase (540 aa).

FAD-binding positions include 16 to 19, Lys-38, 45 to 52, 161 to 162, and Asp-223; these read SGAA, STFYAQGG, and NA. Residues His-244 and 259–260 each bind succinate; that span reads TE. The active-site Proton donor/acceptor is the Arg-290. Glu-375 contacts FAD. Position 389 (Ser-389) interacts with succinate. Residue 391–392 coordinates FAD; the sequence is SL.

This sequence belongs to the FAD-dependent oxidoreductase 2 family. NadB subfamily. In terms of assembly, monomer. Homodimer. Both the monomeric and dimeric forms of the enzyme are catalytically active. Requires FAD as cofactor.

The protein resides in the cytoplasm. It catalyses the reaction L-aspartate + O2 = iminosuccinate + H2O2. The enzyme catalyses fumarate + L-aspartate = iminosuccinate + succinate. It participates in cofactor biosynthesis; NAD(+) biosynthesis; iminoaspartate from L-aspartate (oxidase route): step 1/1. With respect to regulation, inhibited by the product iminoaspartate. Competitively inhibited by mesotartrate. NAD acts as a competitive inhibitor to FAD. Inhibited by iodoacetic acid, diethylpyrocarbonate and tetranitromethane. Its function is as follows. Catalyzes the oxidation of L-aspartate to iminoaspartate, the first step in the de novo biosynthesis of NAD(+). Can use either oxygen or fumarate as electron acceptors, which allows the enzyme to be functional under aerobic and anaerobic conditions. In vivo, fumarate is used under anaerobic conditions, and oxygen is the predominant electron acceptor under aerobic conditions due to the lower fumarate levels. In vitro, fumarate is a more efficient electron acceptor and is kinetically superior to oxygen. The sequence is that of L-aspartate oxidase from Escherichia coli (strain K12).